The primary structure comprises 226 residues: ATP-dependent dethiobiotin synthetase BioD (226 aa).

12-17 (GVGKTV) contributes to the ATP binding site. Thr-16 is a binding site for Mg(2+). Lys-37 is an active-site residue. Thr-41 serves as a coordination point for substrate. ATP is bound by residues Asp-49, 108–111 (EGAG), 169–170 (GS), and 197–199 (PAG). Mg(2+) contacts are provided by Asp-49 and Glu-108.

The protein belongs to the dethiobiotin synthetase family. As to quaternary structure, homodimer. Mg(2+) is required as a cofactor.

It localises to the cytoplasm. The catalysed reaction is (7R,8S)-7,8-diammoniononanoate + CO2 + ATP = (4R,5S)-dethiobiotin + ADP + phosphate + 3 H(+). It participates in cofactor biosynthesis; biotin biosynthesis; biotin from 7,8-diaminononanoate: step 1/2. Its function is as follows. Catalyzes a mechanistically unusual reaction, the ATP-dependent insertion of CO2 between the N7 and N8 nitrogen atoms of 7,8-diaminopelargonic acid (DAPA, also called 7,8-diammoniononanoate) to form a ureido ring. The protein is ATP-dependent dethiobiotin synthetase BioD of Mycobacterium leprae (strain Br4923).